The primary structure comprises 330 residues: Src kinase-associated phosphoprotein 2-A (330 aa).

The disordered stretch occupies residues Gln53–Val77. The region spanning Asp105–Gly208 is the PH domain. The segment at Ser228–Thr261 is disordered. Positions Gly247–Thr261 are enriched in polar residues. Positions Asp268–Asp329 constitute an SH3 domain.

Belongs to the SKAP family. In terms of processing, phosphorylated on tyrosines.

It localises to the cytoplasm. Functionally, may be involved in B-cell and macrophage adhesion processes. May play a role in src signaling pathway. In Xenopus laevis (African clawed frog), this protein is Src kinase-associated phosphoprotein 2-A (skap2-a).